Consider the following 250-residue polypeptide: Trypsin (250 aa).

Residues 1 to 15 form the signal peptide; it reads MRLLALLLMVGAAVA. A propeptide spans 16–22 (activation peptide); sequence VPREDGR. Residues 23 to 247 form the Peptidase S1 domain; that stretch reads IIGGHECAAH…FLGWIERTLE (225 aa). Intrachain disulfides connect Cys29/Cys163, Cys47/Cys63, Cys133/Cys236, Cys140/Cys209, Cys174/Cys188, and Cys199/Cys223. Residues His62 and Asp106 each act as charge relay system in the active site. Catalysis depends on Ser203, which acts as the Charge relay system.

This sequence belongs to the peptidase S1 family.

The protein localises to the secreted. The protein resides in the extracellular space. It catalyses the reaction Preferential cleavage: Arg-|-Xaa, Lys-|-Xaa.. The polypeptide is Trypsin (Pleuronectes platessa (European plaice)).